We begin with the raw amino-acid sequence, 505 residues long: Probable malate:quinone oxidoreductase (505 aa).

It belongs to the MQO family. FAD serves as cofactor.

It carries out the reaction (S)-malate + a quinone = a quinol + oxaloacetate. It participates in carbohydrate metabolism; tricarboxylic acid cycle; oxaloacetate from (S)-malate (quinone route): step 1/1. This Pseudomonas fluorescens protein is Probable malate:quinone oxidoreductase.